Consider the following 502-residue polypeptide: ATP synthase subunit alpha (502 aa).

169–176 (GDRQTGKT) contributes to the ATP binding site.

The protein belongs to the ATPase alpha/beta chains family. As to quaternary structure, F-type ATPases have 2 components, CF(1) - the catalytic core - and CF(0) - the membrane proton channel. CF(1) has five subunits: alpha(3), beta(3), gamma(1), delta(1), epsilon(1). CF(0) has three main subunits: a(1), b(2) and c(9-12). The alpha and beta chains form an alternating ring which encloses part of the gamma chain. CF(1) is attached to CF(0) by a central stalk formed by the gamma and epsilon chains, while a peripheral stalk is formed by the delta and b chains.

It is found in the cell membrane. The enzyme catalyses ATP + H2O + 4 H(+)(in) = ADP + phosphate + 5 H(+)(out). Its function is as follows. Produces ATP from ADP in the presence of a proton gradient across the membrane. The alpha chain is a regulatory subunit. The sequence is that of ATP synthase subunit alpha from Clostridium perfringens (strain SM101 / Type A).